The following is a 169-amino-acid chain: Ribosome-binding factor A (169 aa).

The disordered stretch occupies residues 124–169 (AGAKHAGDADPYKSDIPEDVEIDEDDFDEEDEDLIDDEELDEDGNK). Over residues 128–139 (HAGDADPYKSDI) the composition is skewed to basic and acidic residues. Over residues 140-169 (PEDVEIDEDDFDEEDEDLIDDEELDEDGNK) the composition is skewed to acidic residues.

Belongs to the RbfA family. Monomer. Binds 30S ribosomal subunits, but not 50S ribosomal subunits or 70S ribosomes.

The protein localises to the cytoplasm. Functionally, one of several proteins that assist in the late maturation steps of the functional core of the 30S ribosomal subunit. Associates with free 30S ribosomal subunits (but not with 30S subunits that are part of 70S ribosomes or polysomes). Required for efficient processing of 16S rRNA. May interact with the 5'-terminal helix region of 16S rRNA. The sequence is that of Ribosome-binding factor A from Arthrobacter sp. (strain FB24).